Reading from the N-terminus, the 204-residue chain is Tumor protein D53 (204 aa).

The segment at 1–31 (MEAQAQGLLETEPLQGRDGDAVGSADFSSML) is disordered. A coiled-coil region spans residues 22 to 73 (VGSADFSSMLSEEEKEELKAELIQLEDEITTLRQVLSAKERHLVEIKQKLGM). Ser29, Ser86, Ser122, and Ser131 each carry phosphoserine. Arg133 is subject to Omega-N-methylarginine. Phosphothreonine is present on Thr146. 2 positions are modified to phosphoserine: Ser149 and Ser174. The interval 164-204 (KVGGTNHGGGSFEEVLNSTAHASSQNASAGSRQTKDEELQC) is disordered. Over residues 179-195 (LNSTAHASSQNASAGSR) the composition is skewed to polar residues.

The protein belongs to the TPD52 family. In terms of assembly, forms a homodimer or heterodimer with other members of the family.

This chain is Tumor protein D53 (Tpd52l1), found in Mus musculus (Mouse).